We begin with the raw amino-acid sequence, 236 residues long: Biosynthetic peptidoglycan transglycosylase (236 aa).

The chain crosses the membrane as a helical span at residues 12 to 31 (ALLWFAAGSIAVVLVLRWVP).

It belongs to the glycosyltransferase 51 family.

Its subcellular location is the cell inner membrane. The catalysed reaction is [GlcNAc-(1-&gt;4)-Mur2Ac(oyl-L-Ala-gamma-D-Glu-L-Lys-D-Ala-D-Ala)](n)-di-trans,octa-cis-undecaprenyl diphosphate + beta-D-GlcNAc-(1-&gt;4)-Mur2Ac(oyl-L-Ala-gamma-D-Glu-L-Lys-D-Ala-D-Ala)-di-trans,octa-cis-undecaprenyl diphosphate = [GlcNAc-(1-&gt;4)-Mur2Ac(oyl-L-Ala-gamma-D-Glu-L-Lys-D-Ala-D-Ala)](n+1)-di-trans,octa-cis-undecaprenyl diphosphate + di-trans,octa-cis-undecaprenyl diphosphate + H(+). Its pathway is cell wall biogenesis; peptidoglycan biosynthesis. Functionally, peptidoglycan polymerase that catalyzes glycan chain elongation from lipid-linked precursors. This chain is Biosynthetic peptidoglycan transglycosylase, found in Pseudomonas entomophila (strain L48).